Here is a 347-residue protein sequence, read N- to C-terminus: Protein RecA (347 aa).

An ATP-binding site is contributed by 64–71 (GPESSGKT).

Belongs to the RecA family.

It is found in the cytoplasm. In terms of biological role, can catalyze the hydrolysis of ATP in the presence of single-stranded DNA, the ATP-dependent uptake of single-stranded DNA by duplex DNA, and the ATP-dependent hybridization of homologous single-stranded DNAs. It interacts with LexA causing its activation and leading to its autocatalytic cleavage. In Bartonella tribocorum (strain CIP 105476 / IBS 506), this protein is Protein RecA.